The sequence spans 179 residues: Inner membrane-spanning protein YciB (179 aa).

Transmembrane regions (helical) follow at residues 22–42 (IYVASGALIVATALALVFTWF), 50–70 (MTLITFLMVLVFGTLTLVFHN), 76–96 (WKVTIIYTLFALALLISQLVL), 121–141 (LAWAVFFLVCGLANIYVAFWL), and 149–169 (FKVFGLTALTLVFTLLSGVYI).

Belongs to the YciB family.

Its subcellular location is the cell inner membrane. Its function is as follows. Plays a role in cell envelope biogenesis, maintenance of cell envelope integrity and membrane homeostasis. This is Inner membrane-spanning protein YciB from Serratia proteamaculans (strain 568).